The sequence spans 408 residues: Multidrug resistance protein MdtG (408 aa).

11 consecutive transmembrane segments (helical) span residues 16–36 (LIVAWLGCFLTGAAFSLVMPF), 58–78 (IVFSITFLFSAIASPFWGGLA), 92–112 (LGMGIVMVLMGLAQNIWQFLI), 115–135 (ALLGLLGGFVPNANALIATQV), 146–166 (TLSTGGVSGALLGPMAGGLLA), 173–193 (PVFFITASVLILCFFVTLFCI), 224–244 (LFVTTLIIQVATGSIAPILTL), 256–276 (VAFISGMIASVPGVAALLSAP), 290–310 (ILITALIFSVLLLIPMSYVQT), 319–339 (FLLGAADGALLPAVQTLLVYN), and 378–398 (AVFLVTAGVVLFNAVYSWNSL).

It belongs to the major facilitator superfamily. DHA1 family. MdtG (TC 2.A.1.2.20) subfamily.

It localises to the cell inner membrane. Functionally, confers resistance to fosfomycin and deoxycholate. The polypeptide is Multidrug resistance protein MdtG (Escherichia coli O6:K15:H31 (strain 536 / UPEC)).